The primary structure comprises 345 residues: Treponemal membrane protein A (345 aa).

Positions 1–21 (MNAHTLVYSGVALACAAMLGS) are cleaved as a signal peptide. A lipid anchor (N-palmitoyl cysteine) is attached at cysteine 22. Residue cysteine 22 is the site of S-diacylglycerol cysteine attachment. The segment at 256 to 345 (QSAKTKQKAS…SSMNEEGASR (90 aa)) is disordered. Positions 314–323 (SDTSSPSRVQ) are enriched in polar residues.

The protein to T.phagedenis TmpA.

It localises to the cell membrane. The sequence is that of Treponemal membrane protein A (tmpA) from Treponema pallidum (strain Nichols).